A 98-amino-acid polypeptide reads, in one-letter code: Citrate lyase acyl carrier protein (98 aa).

Ser14 bears the O-(phosphoribosyl dephospho-coenzyme A)serine mark.

It belongs to the CitD family. Oligomer with a subunit composition of (alpha,beta,gamma)6.

The protein resides in the cytoplasm. Covalent carrier of the coenzyme of citrate lyase. This chain is Citrate lyase acyl carrier protein, found in Albidiferax ferrireducens (strain ATCC BAA-621 / DSM 15236 / T118) (Rhodoferax ferrireducens).